The sequence spans 335 residues: Methionine import ATP-binding protein MetN 1 (335 aa).

In terms of domain architecture, ABC transporter spans 2 to 242 (IEFQNVHKTY…PKHPTTKRFV (241 aa)). Residue 38-45 (GHSGAGKS) coordinates ATP.

The protein belongs to the ABC transporter superfamily. Methionine importer (TC 3.A.1.24) family. As to quaternary structure, the complex is composed of two ATP-binding proteins (MetN), two transmembrane proteins (MetI) and a solute-binding protein (MetQ).

It localises to the cell inner membrane. The catalysed reaction is L-methionine(out) + ATP + H2O = L-methionine(in) + ADP + phosphate + H(+). The enzyme catalyses D-methionine(out) + ATP + H2O = D-methionine(in) + ADP + phosphate + H(+). Functionally, part of the ABC transporter complex MetNIQ involved in methionine import. Responsible for energy coupling to the transport system. In Pseudomonas fluorescens (strain Pf0-1), this protein is Methionine import ATP-binding protein MetN 1.